The primary structure comprises 436 residues: uncharacterized protein (436 aa).

Residues 1–20 (MKCAVAILLVCLTLQQAAYG) form the signal peptide. Coiled-coil stretches lie at residues 25–87 (EEVK…ALRN), 154–207 (MRKT…NSVE), and 247–329 (ESWG…ASLL). Residues 371-390 (EEEIAPSTEEDGSEELEADS) show a composition bias toward acidic residues. The segment at 371–419 (EEEIAPSTEEDGSEELEADSYDSKVGGESPISQRTEERQGAEERSRLRR) is disordered. Residues 404 to 415 (RTEERQGAEERS) are compositionally biased toward basic and acidic residues.

Component of the acid-insoluble organic matrix of the aragonitic skeleton (at protein level).

It localises to the secreted. This is an uncharacterized protein from Acropora millepora (Staghorn coral).